Reading from the N-terminus, the 11103-residue chain is Colossin-A (11103 aa).

The first 35 residues, 1 to 35, serve as a signal peptide directing secretion; that stretch reads MGTIKTKFKNNYLKNSYLFIIYIILFNLVIGIANS. N-linked (GlcNAc...) asparagine glycans are attached at residues asparagine 95, asparagine 120, asparagine 137, and asparagine 198. A Kelch 1 repeat occupies 273–324; the sequence is NLFAVGNYVFFDVNRDGVHETTELFAPNVKVELYDAISSTRLIASTFTDLNG. Residues 298–359 enclose the CNA-B 1 domain; the sequence is APNVKVELYD…SNGPDNVINA (62 aa). Residues asparagine 372, asparagine 386, and asparagine 422 are each glycosylated (N-linked (GlcNAc...) asparagine). One can recognise a CNA-B 2 domain in the interval 423–469; it reads LSGITVQLTTPSHVVLKTAQTDYAGNYVFDDLSEGVYSVHFILPENY. An N-linked (GlcNAc...) asparagine glycan is attached at asparagine 493. 6 consecutive CNA-B domains span residues 551-599, 676-745, 803-871, 931-999, 1057-1095, and 1170-1231; these read LPGV…PDGY, VANV…INLT, APFV…FTLN, AEGV…IDLS, LPNI…EGDY, and LSNT…FNSS. N-linked (GlcNAc...) asparagine glycosylation occurs at asparagine 678. Asparagine 1059, asparagine 1229, and asparagine 1239 each carry an N-linked (GlcNAc...) asparagine glycan. Residues 1277–1314 enclose the CNA-B 9 domain; it reads ISNIPLSLISQKTNQIISSVVTDSNGKYQFEDVPPGDY. N-linked (GlcNAc...) asparagine glycosylation occurs at asparagine 1329. CNA-B domains are found at residues 1391–1458, 1494–1530, 1602–1651, 1708–1779, 1824–1891, 1927–1963, 2035–2086, and 2141–2177; these read SDVS…FKLT, LPGV…PGDY, LPGV…YKQV, LSDI…VTVK, LPGV…QVAQ, and VEGI…PGDY. N-linked (GlcNAc...) asparagine glycosylation occurs at asparagine 1613. The disordered stretch occupies residues 1716-1740; the sequence is TDKDGNEISNTKSGPDGKYQFEDVP. 2 N-linked (GlcNAc...) asparagine glycosylation sites follow: asparagine 1759 and asparagine 1772. N-linked (GlcNAc...) asparagine glycosylation occurs at asparagine 2046. Asparagine 2192 and asparagine 2311 each carry an N-linked (GlcNAc...) asparagine glycan. CNA-B domains lie at 2254 to 2321, 2357 to 2402, 2465 to 2514, 2571 to 2640, 2687 to 2754, 2790 to 2835, 2898 to 2947, and 3004 to 3040; these read SDVS…FKLT, LPGV…TPIG, LPGV…YKQV, LSDI…NFVT, and LEGI…PGDY. A glycan (N-linked (GlcNAc...) asparagine) is linked at asparagine 2476. Positions 2580 to 2603 are disordered; sequence DKDGNEITNTKSGPDGKYQFEDVP. Asparagine 2622 carries N-linked (GlcNAc...) asparagine glycosylation. 2 N-linked (GlcNAc...) asparagine glycosylation sites follow: asparagine 2801 and asparagine 2909. N-linked (GlcNAc...) asparagine glycosylation is found at asparagine 3048, asparagine 3055, and asparagine 3118. CNA-B domains follow at residues 3117-3184, 3220-3256, 3328-3364, and 3434-3470; these read SNVS…FKLT, LPGV…PGDY, LPGV…PGSY, and VEGI…PGDY. Asparagine 3339 is a glycosylation site (N-linked (GlcNAc...) asparagine). N-linked (GlcNAc...) asparagine glycosylation is present at asparagine 3485. The Kelch 2 repeat unit spans residues 3503 to 3549; sequence SCFAVSGPLDNQNLGLSLFYEIGTMVWIDSNNNGKFEQPSDVLKSDV. CNA-B domains are found at residues 3547–3614, 3650–3686, and 3758–3809; these read SDVS…FKLT, LPGV…PGDY, and LPGV…QVAQ. 2 N-linked (GlcNAc...) asparagine glycosylation sites follow: asparagine 3769 and asparagine 3827. The CNA-B 33 domain maps to 3864–3900; sequence LSDITIRLTDKDGKVIQSTTSGPDGKYQFEDVPPGDY. An N-linked (GlcNAc...) asparagine glycan is attached at asparagine 3915. CNA-B domains are found at residues 3980 to 4047, 4083 to 4128, 4191 to 4240, 4297 to 4378, 4425 to 4492, 4528 to 4573, 4636 to 4685, and 4742 to 4778; these read SDVS…FKLT, LPGV…TPIG, LPGV…YKQV, LSDI…NFVT, and VEGI…PGDY. Residue asparagine 4202 is glycosylated (N-linked (GlcNAc...) asparagine). Residues 4286–4341 are disordered; it reads NTGKQTDDSPPLSDITIRLTDKDGNEITKTKSRPDGNENSNTKSGPDGKYQFEDVP. Basic and acidic residues predominate over residues 4304–4321; it reads LTDKDGNEITKTKSRPDG. An N-linked (GlcNAc...) asparagine glycan is attached at asparagine 4360. Asparagine 4647 carries an N-linked (GlcNAc...) asparagine glycan. 2 N-linked (GlcNAc...) asparagine glycosylation sites follow: asparagine 4792 and asparagine 4918. CNA-B domains follow at residues 4865–4928, 4964–5009, 5072–5123, and 5178–5214; these read ITLT…FKLT, LPGV…TPIG, LPGV…QVAQ, and LEGI…PGDY. N-linked (GlcNAc...) asparagine glycosylation is present at asparagine 5083. Asparagine 5229, asparagine 5292, and asparagine 5348 each carry an N-linked (GlcNAc...) asparagine glycan. The Kelch 3 repeat unit spans residues 5247–5293; it reads SCFAVSGPLDNQNLGLSPFYEIGTIVWIDSNNNDKFEQPSDIGKSNV. CNA-B domains follow at residues 5291–5358, 5394–5430, 5502–5553, and 5608–5644; these read SNVS…FKLT, LPGV…PGDY, LPGV…QVAQ, and LSDI…PGDY. Asparagine 5513 carries an N-linked (GlcNAc...) asparagine glycan. Asparagine 5659 carries N-linked (GlcNAc...) asparagine glycosylation. 4 consecutive CNA-B domains span residues 5724-5791, 5827-5872, 5935-5984, and 6041-6077; these read SDVS…FKLT, LPGV…TPIG, LPGV…YKQV, and VEGI…PGDY. Asparagine 5946 carries an N-linked (GlcNAc...) asparagine glycan. N-linked (GlcNAc...) asparagine glycans are attached at residues asparagine 6092 and asparagine 6155. CNA-B domains are found at residues 6154–6221, 6257–6302, 6365–6416, and 6471–6507; these read SNVS…FKLT, LPGV…TPIG, LPGV…QDAQ, and LSDI…PGDY. An N-linked (GlcNAc...) asparagine glycan is attached at asparagine 6376. Asparagine 6522 and asparagine 6535 each carry an N-linked (GlcNAc...) asparagine glycan. CNA-B domains lie at 6587-6654, 6690-6726, 6798-6849, and 6904-6940; these read SDVS…FKLT, LEGV…PGDY, LPGV…QVNQ, and VEGI…PGDY. N-linked (GlcNAc...) asparagine glycosylation is found at asparagine 6701, asparagine 6809, and asparagine 6848. 4 N-linked (GlcNAc...) asparagine glycosylation sites follow: asparagine 6954, asparagine 7080, asparagine 7137, and asparagine 7245. 8 consecutive CNA-B domains span residues 7023 to 7090, 7126 to 7171, 7234 to 7285, 7340 to 7411, 7456 to 7523, 7559 to 7596, 7668 to 7719, and 7774 to 7810; these read SDVS…FKLT, LAGV…TPIG, LPGV…QDAQ, LSDI…VTVK, LPGV…PGDY, LTGV…QVAQ, and VEGI…PGDY. Residues 7351-7372 are disordered; sequence DGNEITNTKSGPDGKYQFEDVP. Asparagine 7391 and asparagine 7404 each carry an N-linked (GlcNAc...) asparagine glycan. The N-linked (GlcNAc...) asparagine glycan is linked to asparagine 7679. 2 N-linked (GlcNAc...) asparagine glycosylation sites follow: asparagine 7825 and asparagine 7837. CNA-B domains lie at 7887 to 7954, 7990 to 8035, 8098 to 8149, 8204 to 8265, 8313 to 8374, 8420 to 8456, and 8528 to 8587; these read SDVS…FKLT, LPGV…TPIG, LPGV…QVAQ, IPNI…FSLS, VGKS…VVDQ, LPGV…QGDY, and LPGI…PFDS. 2 N-linked (GlcNAc...) asparagine glycosylation sites follow: asparagine 8109 and asparagine 8255. N-linked (GlcNAc...) asparagine glycosylation is found at asparagine 8441, asparagine 8539, asparagine 8629, asparagine 8636, asparagine 8655, asparagine 8693, asparagine 8753, asparagine 8811, asparagine 8896, asparagine 8930, asparagine 8976, asparagine 9023, asparagine 9073, asparagine 9087, asparagine 9123, asparagine 9137, asparagine 9146, asparagine 9149, asparagine 9186, asparagine 9297, asparagine 9305, asparagine 9349, asparagine 9409, asparagine 9419, asparagine 9533, asparagine 9543, asparagine 9556, asparagine 9601, asparagine 9709, asparagine 9718, asparagine 9786, asparagine 9839, asparagine 9850, asparagine 9867, asparagine 9891, asparagine 9941, asparagine 9957, asparagine 9989, asparagine 10042, asparagine 10096, asparagine 10111, asparagine 10174, asparagine 10267, asparagine 10315, asparagine 10348, asparagine 10360, asparagine 10379, asparagine 10394, asparagine 10431, asparagine 10477, asparagine 10552, asparagine 10581, asparagine 10715, asparagine 10786, asparagine 10802, asparagine 10943, and asparagine 11018. A Kelch 4 repeat occupies 8592-8638; the sequence is CFDLLDKSITNANLGLIPLYNIGSDAWLDNLNNGVRRNDSLLVPNVT. One can recognise a CNA-B 77 domain in the interval 8634–8680; that stretch reads VPNVTMSLYDNNGNLIETTITNSSGKYQFNDIQPGSYCVRATVPSNY. The CNA-B 78 domain maps to 8751 to 8810; sequence LPNVTVQLYDKVSGNILAATRSDDKGGYVVPNLLPSADYCVQFEVPPGYIVVVDSDDSVT. The 50-residue stretch at 8965–9014 folds into the CNA-B 79 domain; the sequence is LPGVSVSLFSPNGTSIANTITDENGKYAFKDQVPGSYCIKMIIPPHYQQV. The CNA-B 80 domain maps to 9071–9107; it reads VPNITMTLLDSQGKQINSTITNANGFYQFVDVAPGNY. A CNA-B 81 domain is found at 9185 to 9220; sequence ANVSLSLVNTGNSEIKTTTTNSQGKYSFGQLLAGNY. One can recognise a CNA-B 82 domain in the interval 9299–9332; sequence TITLTPNNTALPTQTTTTDVNGNYRFDNLVVGNY. CNA-B domains lie at 9407-9447 and 9531-9569; these read LVNI…VVQF and MANI…PGNY. The CNA-B 85 domain maps to 9659 to 9728; that stretch reads VEGITVRIYD…ATGYISIDLS (70 aa). In terms of domain architecture, CNA-B 86 spans 10044 to 10103; the sequence is TLFNADGSTPNDIFGKPIQMAVTDVNGKYSIPNVPPGSYYMTVSIPPRYIISNFTTTGLV. One can recognise a CNA-B 87 domain in the interval 10172-10236; the sequence is LPNVTVLLLN…ITPTKLVSTS (65 aa). Positions 10313–10370 constitute a CNA-B 88 domain; the sequence is PGNFTVQLKSANQAVNGGLTTVPIGTVVATSPVAANGSFSIPNLQLGNYTLTLIPPSG.

The protein belongs to the serine-aspartate repeat-containing protein (SDr) family.

The protein localises to the secreted. This is Colossin-A (colA) from Dictyostelium discoideum (Social amoeba).